Here is a 193-residue protein sequence, read N- to C-terminus: dCTP deaminase (193 aa).

Residues 110–115, Asp128, 136–138, Tyr171, Lys178, and Gln182 contribute to the dCTP site; these read RSSLAR and VLE. The Proton donor/acceptor role is filled by Glu138. Residues 170–181 show a composition bias toward basic and acidic residues; it reads PYNRRQDAKYRD. The tract at residues 170-193 is disordered; sequence PYNRRQDAKYRDQQGAVASRIDKD.

This sequence belongs to the dCTP deaminase family. Homotrimer.

The catalysed reaction is dCTP + H2O + H(+) = dUTP + NH4(+). It functions in the pathway pyrimidine metabolism; dUMP biosynthesis; dUMP from dCTP (dUTP route): step 1/2. Functionally, catalyzes the deamination of dCTP to dUTP. The polypeptide is dCTP deaminase (Enterobacter sp. (strain 638)).